A 574-amino-acid polypeptide reads, in one-letter code: Ankyrin repeat protein B18 (574 aa).

ANK repeat units follow at residues 56 to 87 (TGYT…NVTM), 135 to 164 (IKSR…DPNF), 167 to 213 (DGYT…NLNA), 217 to 249 (CGNT…NFKI), 253 to 285 (HGLT…NVGE), and 327 to 356 (EGKT…DINA). The F-box domain occupies 541–574 (NCLLTLLPSEIIYEILYMLTINDLYNISYPPTKV).

In Homo sapiens (Human), this protein is Ankyrin repeat protein B18.